The primary structure comprises 253 residues: Dehydration-responsive element-binding protein 1D (253 aa).

Positions 1–22 are enriched in polar residues; that stretch reads MEKNTAASGQLMTSSAEATPSS. Residues 1-31 form a disordered region; the sequence is MEKNTAASGQLMTSSAEATPSSPKRPAGRTK. A DNA-binding region (AP2/ERF) is located at residues 39–98; it reads VFRGVRWRGCAGRWVCKVRVPGSRGDRFWIGTSDTAEETARTHDAAMLALCGASASLNFA. Residues 131–153 form a disordered region; that stretch reads RRVPAPGRGSTATATATSGDAAS. Low complexity predominate over residues 134–153; it reads PAPGRGSTATATATSGDAAS.

This sequence belongs to the AP2/ERF transcription factor family. ERF subfamily.

The protein localises to the nucleus. Transcriptional activator that binds specifically to the DNA sequence 5'-[AG]CCGAC-3'. Binding to the C-repeat/DRE element mediates high salinity- and dehydration-inducible transcription. In Oryza sativa subsp. indica (Rice), this protein is Dehydration-responsive element-binding protein 1D (DREB1D).